We begin with the raw amino-acid sequence, 331 residues long: Putative peptidyl-prolyl cis-trans isomerase RF_0616 (331 aa).

Residues 28-50 (NPTTIEQTASNNSSTDENQTSIN) form a disordered region. The PPIase FKBP-type domain occupies 128–226 (GHVVTVFYQI…NNEVKIYDDE (99 aa)).

The catalysed reaction is [protein]-peptidylproline (omega=180) = [protein]-peptidylproline (omega=0). The protein is Putative peptidyl-prolyl cis-trans isomerase RF_0616 of Rickettsia felis (strain ATCC VR-1525 / URRWXCal2) (Rickettsia azadi).